The primary structure comprises 1404 residues: DNA-directed RNA polymerase subunit beta' (1404 aa).

The Zn(2+) site is built by Cys70, Cys72, Cys85, and Cys88. Asp460, Asp462, and Asp464 together coordinate Mg(2+). Zn(2+)-binding residues include Cys814, Cys889, Cys896, and Cys899.

Belongs to the RNA polymerase beta' chain family. In terms of assembly, the RNAP catalytic core consists of 2 alpha, 1 beta, 1 beta' and 1 omega subunit. When a sigma factor is associated with the core the holoenzyme is formed, which can initiate transcription. Mg(2+) is required as a cofactor. It depends on Zn(2+) as a cofactor.

It catalyses the reaction RNA(n) + a ribonucleoside 5'-triphosphate = RNA(n+1) + diphosphate. In terms of biological role, DNA-dependent RNA polymerase catalyzes the transcription of DNA into RNA using the four ribonucleoside triphosphates as substrates. In Xanthomonas axonopodis pv. citri (strain 306), this protein is DNA-directed RNA polymerase subunit beta'.